A 433-amino-acid polypeptide reads, in one-letter code: Trigger factor (433 aa).

The region spanning 161–246 (GDRVTMDFVG…AKKVEARDLP (86 aa)) is the PPIase FKBP-type domain.

The protein belongs to the FKBP-type PPIase family. Tig subfamily.

Its subcellular location is the cytoplasm. The enzyme catalyses [protein]-peptidylproline (omega=180) = [protein]-peptidylproline (omega=0). Its function is as follows. Involved in protein export. Acts as a chaperone by maintaining the newly synthesized protein in an open conformation. Functions as a peptidyl-prolyl cis-trans isomerase. The polypeptide is Trigger factor (Idiomarina loihiensis (strain ATCC BAA-735 / DSM 15497 / L2-TR)).